Reading from the N-terminus, the 456-residue chain is Probable glycine dehydrogenase (decarboxylating) subunit 1 (456 aa).

Belongs to the GcvP family. N-terminal subunit subfamily. The glycine cleavage system is composed of four proteins: P, T, L and H. In this organism, the P 'protein' is a heterodimer of two subunits.

It carries out the reaction N(6)-[(R)-lipoyl]-L-lysyl-[glycine-cleavage complex H protein] + glycine + H(+) = N(6)-[(R)-S(8)-aminomethyldihydrolipoyl]-L-lysyl-[glycine-cleavage complex H protein] + CO2. Functionally, the glycine cleavage system catalyzes the degradation of glycine. The P protein binds the alpha-amino group of glycine through its pyridoxal phosphate cofactor; CO(2) is released and the remaining methylamine moiety is then transferred to the lipoamide cofactor of the H protein. The polypeptide is Probable glycine dehydrogenase (decarboxylating) subunit 1 (Legionella pneumophila subsp. pneumophila (strain Philadelphia 1 / ATCC 33152 / DSM 7513)).